The chain runs to 166 residues: ATP synthase subunit b (166 aa).

Residues 7-27 form a helical membrane-spanning segment; the sequence is QFSLGLFILQIILFVGLILLL.

This sequence belongs to the ATPase B chain family. In terms of assembly, F-type ATPases have 2 components, F(1) - the catalytic core - and F(0) - the membrane proton channel. F(1) has five subunits: alpha(3), beta(3), gamma(1), delta(1), epsilon(1). F(0) has three main subunits: a(1), b(2) and c(10-14). The alpha and beta chains form an alternating ring which encloses part of the gamma chain. F(1) is attached to F(0) by a central stalk formed by the gamma and epsilon chains, while a peripheral stalk is formed by the delta and b chains.

It is found in the cell inner membrane. Its function is as follows. F(1)F(0) ATP synthase produces ATP from ADP in the presence of a proton or sodium gradient. F-type ATPases consist of two structural domains, F(1) containing the extramembraneous catalytic core and F(0) containing the membrane proton channel, linked together by a central stalk and a peripheral stalk. During catalysis, ATP synthesis in the catalytic domain of F(1) is coupled via a rotary mechanism of the central stalk subunits to proton translocation. In terms of biological role, component of the F(0) channel, it forms part of the peripheral stalk, linking F(1) to F(0). This chain is ATP synthase subunit b, found in Flavobacterium psychrophilum (strain ATCC 49511 / DSM 21280 / CIP 103535 / JIP02/86).